The chain runs to 150 residues: Large ribosomal subunit protein uL15 (150 aa).

Residues 1–55 form a disordered region; that stretch reads MADNEILQMHDLKPAPGAKKDRTRVGRGEGSKGKTAGRGAKGQTKRNHVRPGFEG. The segment covering 8–32 has biased composition (basic and acidic residues); the sequence is QMHDLKPAPGAKKDRTRVGRGEGSK.

This sequence belongs to the universal ribosomal protein uL15 family. As to quaternary structure, part of the 50S ribosomal subunit.

Its function is as follows. Binds to the 23S rRNA. This is Large ribosomal subunit protein uL15 from Bifidobacterium longum (strain DJO10A).